The primary structure comprises 879 residues: DNA mismatch repair protein MutS (879 aa).

629–636 is an ATP binding site; it reads GPNMAGKS. The disordered stretch occupies residues 824 to 845; the sequence is VGGQPQKELSEHKPHQPSLFAP.

This sequence belongs to the DNA mismatch repair MutS family.

Its function is as follows. This protein is involved in the repair of mismatches in DNA. It is possible that it carries out the mismatch recognition step. This protein has a weak ATPase activity. The protein is DNA mismatch repair protein MutS of Desulfotalea psychrophila (strain LSv54 / DSM 12343).